The chain runs to 701 residues: Nucleolar transcription factor 1-B (701 aa).

Residues 1-21 are disordered; it reads MNGAAGGDTQGKMTAPKDQDQ. DNA-binding regions (HMG box) lie at residues 112–180, 196–264, 298–362, 422–489, and 508–574; these read PKKP…AKFR, PEKP…REYM, TKPP…MRFL, PETP…SDMR, and KKAP…DTWM. Positions 382-426 are disordered; that stretch reads MKRKRTNTPASKMATEDAAKVKSRSGQADKKKAAEERAKLPETPK. Positions 408–426 are enriched in basic and acidic residues; it reads QADKKKAAEERAKLPETPK. The segment at 584 to 701 is disordered; that stretch reads AYKEQNTNKR…SADSSDSDSN (118 aa). Positions 597-612 are enriched in polar residues; the sequence is TKIQAPSSKSKLVIQS. The span at 615–682 shows a compositional bias: acidic residues; it reads DDDEDDEDDE…DNEEDDDDNE (68 aa). Residues 683-695 show a composition bias toward low complexity; that stretch reads SGSSSSSSSSADS.

As to quaternary structure, XUBF consists of 2 polypeptides of 82 and 85 kDa, encoded by the same or closely related genes.

Its subcellular location is the nucleus. Functionally, UBF recognizes the ribosomal RNA gene promotor and activates transcription mediated by RNA polymerase I through cooperative interactions with the species-specific factor SL1. It binds specifically to the upstream control element. The sequence is that of Nucleolar transcription factor 1-B (ubtf-b) from Xenopus laevis (African clawed frog).